The sequence spans 40 residues: Small polypeptide DEVIL 3 (40 aa).

A required for DVL/RTFL small polypeptide activity region spans residues 9 to 40; it reads PCNKKLGGYLKEQKGRLYIIRRCVVMLICWHD. A helical membrane pass occupies residues 12–28; sequence KKLGGYLKEQKGRLYII.

The protein belongs to the DVL/RTFL small polypeptides family. As to expression, mostly expressed in flowers and stems, and, to a lower extent, in roots and leaves.

Its subcellular location is the cell membrane. In terms of biological role, small polypeptide acting as a regulatory molecule which coordinates cellular responses required for differentiation, growth and development, including leaves shape, pedicule elongation, inflorescence organization and fruit maturation, probably by restricting polar cell proliferation in lateral organs and coordinating socket cell recruitment and differentiation at trichome sites. The sequence is that of Small polypeptide DEVIL 3 from Arabidopsis thaliana (Mouse-ear cress).